The sequence spans 86 residues: Large ribosomal subunit protein bL31B (86 aa).

Belongs to the bacterial ribosomal protein bL31 family. Type B subfamily. In terms of assembly, part of the 50S ribosomal subunit.

The polypeptide is Large ribosomal subunit protein bL31B (Chloroherpeton thalassium (strain ATCC 35110 / GB-78)).